The sequence spans 546 residues: Probable protein kinase UbiB (546 aa).

Residues 124–502 enclose the Protein kinase domain; that stretch reads DFSVEPLASA…HVRQGQSRYL (379 aa). ATP-binding positions include 130 to 138 and K153; that span reads LASASIAQV. Residue D288 is the Proton acceptor of the active site. Transmembrane regions (helical) follow at residues 501-521 and 522-542; these read YLFGIGAVLLLSGTLLFIHRP and EWGMMPGWLMAGGVVTWLIGW.

Belongs to the ABC1 family. UbiB subfamily.

The protein localises to the cell inner membrane. Its pathway is cofactor biosynthesis; ubiquinone biosynthesis [regulation]. Its function is as follows. Is probably a protein kinase regulator of UbiI activity which is involved in aerobic coenzyme Q (ubiquinone) biosynthesis. This is Probable protein kinase UbiB from Klebsiella pneumoniae (strain 342).